Reading from the N-terminus, the 109-residue chain is Mitochondrial pyruvate carrier 2 (109 aa).

3 consecutive transmembrane segments (helical) span residues 19–35, 51–67, and 74–90; these read IHFWAPTFKWGISIANI, IAVTCTGMIWCRCSTII, and LFSVNVAMAATGIYQLT.

The protein belongs to the mitochondrial pyruvate carrier (MPC) (TC 2.A.105) family.

It is found in the mitochondrion inner membrane. Functionally, mediates the uptake of pyruvate into mitochondria. In Arabidopsis thaliana (Mouse-ear cress), this protein is Mitochondrial pyruvate carrier 2.